Reading from the N-terminus, the 219-residue chain is uncharacterized protein (219 aa).

The segment covering 139–154 (PRKIKQKKKTKKKRPS) has biased composition (basic residues). The disordered stretch occupies residues 139 to 160 (PRKIKQKKKTKKKRPSKSAPKT). The region spanning 159–217 (KTYTVKKGDTLWDLAGKFYGDSTKWRKIWKVNKKAMIKRSKRNIRQPGHWIFPGQKLKI) is the LysM domain.

This is an uncharacterized protein from Bacillus subtilis (strain 168).